The chain runs to 293 residues: 4-diphosphocytidyl-2-C-methyl-D-erythritol kinase (293 aa).

The active site involves lysine 10. Position 94-104 (proline 94–serine 104) interacts with ATP. Aspartate 136 is a catalytic residue.

It belongs to the GHMP kinase family. IspE subfamily.

The enzyme catalyses 4-CDP-2-C-methyl-D-erythritol + ATP = 4-CDP-2-C-methyl-D-erythritol 2-phosphate + ADP + H(+). It participates in isoprenoid biosynthesis; isopentenyl diphosphate biosynthesis via DXP pathway; isopentenyl diphosphate from 1-deoxy-D-xylulose 5-phosphate: step 3/6. Its function is as follows. Catalyzes the phosphorylation of the position 2 hydroxy group of 4-diphosphocytidyl-2C-methyl-D-erythritol. The polypeptide is 4-diphosphocytidyl-2-C-methyl-D-erythritol kinase (Listeria monocytogenes serovar 1/2a (strain ATCC BAA-679 / EGD-e)).